The chain runs to 573 residues: Pentatricopeptide repeat-containing protein At3g62890 (573 aa).

PPR repeat units lie at residues 23 to 60 (ESFLWNIIIRAIVHNVSSPQRHSPISVYLRMRNHRVSP), 61 to 95 (DFHTFPFLLPSFHNPLHLPLGQRTHAQILLFGLDK), 96 to 126 (DPFVRTSLLNMYSSCGDLRSAQRVFDDSGSK), 127 to 161 (DLPAWNSVVNAYAKAGLIDDARKLFDEMPERNVIS), 162 to 188 (WSCLINGYVMCGKYKEALDLFREMQLP), 198 to 232 (NEFTMSTVLSACGRLGALEQGKWVHAYIDKYHVEI), 233 to 263 (DIVLGTALIDMYAKCGSLERAKRVFNALGSK), 265 to 295 (DVKAYSAMICCLAMYGLTDECFQLFSEMTTS), 301 to 336 (NSVTFVGILGACVHRGLINEGKSYFKMMIEEFGITP), and 337 to 367 (SIQHYGCMVDLYGRSGLIKEAESFIASMPME). Residues 372 to 447 (IWGSLLSGSR…VPGCSYVEVE (76 aa)) are type E motif; degenerate. Residues 448 to 478 (GVVHEFVVGDESQQESERIYAMLDEIMQRLR) form a type E(+) motif region. Residues 479-573 (EAGYVTDTKE…DGSCSCRDFW (95 aa)) are type DYW motif.

Belongs to the PPR family. PCMP-H subfamily.

The protein is Pentatricopeptide repeat-containing protein At3g62890 (PCMP-H82) of Arabidopsis thaliana (Mouse-ear cress).